Reading from the N-terminus, the 157-residue chain is Small ribosomal subunit protein uS7 (157 aa).

This sequence belongs to the universal ribosomal protein uS7 family. As to quaternary structure, part of the 30S ribosomal subunit. Contacts proteins S9 and S11.

Functionally, one of the primary rRNA binding proteins, it binds directly to 16S rRNA where it nucleates assembly of the head domain of the 30S subunit. Is located at the subunit interface close to the decoding center, probably blocks exit of the E-site tRNA. This Rhodopirellula baltica (strain DSM 10527 / NCIMB 13988 / SH1) protein is Small ribosomal subunit protein uS7.